The sequence spans 185 residues: Ribosome-recycling factor (185 aa).

This sequence belongs to the RRF family.

The protein localises to the cytoplasm. Functionally, responsible for the release of ribosomes from messenger RNA at the termination of protein biosynthesis. May increase the efficiency of translation by recycling ribosomes from one round of translation to another. This chain is Ribosome-recycling factor, found in Buchnera aphidicola subsp. Acyrthosiphon pisum (strain APS) (Acyrthosiphon pisum symbiotic bacterium).